Reading from the N-terminus, the 559-residue chain is Chaperonin GroEL 1 (559 aa).

Residues 29–32, 86–90, Gly-413, 476–478, and Asp-492 each bind ATP; these read TIGP, DGTTT, and NAL. Residues 521-541 form a disordered region; that stretch reads KPEPPAPAPAGDGDPMGGMGG.

Belongs to the chaperonin (HSP60) family. In terms of assembly, forms a cylinder of 14 subunits composed of two heptameric rings stacked back-to-back. Interacts with the co-chaperonin GroES.

It localises to the cytoplasm. The catalysed reaction is ATP + H2O + a folded polypeptide = ADP + phosphate + an unfolded polypeptide.. Its function is as follows. Together with its co-chaperonin GroES, plays an essential role in assisting protein folding. The GroEL-GroES system forms a nano-cage that allows encapsulation of the non-native substrate proteins and provides a physical environment optimized to promote and accelerate protein folding. In Synechococcus sp. (strain CC9605), this protein is Chaperonin GroEL 1.